A 212-amino-acid chain; its full sequence is Imidazole glycerol phosphate synthase subunit HisH (212 aa).

The 211-residue stretch at 2–212 (KVAVIDYGMG…KNFLAWDGNV (211 aa)) folds into the Glutamine amidotransferase type-1 domain. C82 acts as the Nucleophile in catalysis. Active-site residues include H190 and E192.

As to quaternary structure, heterodimer of HisH and HisF.

It localises to the cytoplasm. The catalysed reaction is 5-[(5-phospho-1-deoxy-D-ribulos-1-ylimino)methylamino]-1-(5-phospho-beta-D-ribosyl)imidazole-4-carboxamide + L-glutamine = D-erythro-1-(imidazol-4-yl)glycerol 3-phosphate + 5-amino-1-(5-phospho-beta-D-ribosyl)imidazole-4-carboxamide + L-glutamate + H(+). It carries out the reaction L-glutamine + H2O = L-glutamate + NH4(+). It participates in amino-acid biosynthesis; L-histidine biosynthesis; L-histidine from 5-phospho-alpha-D-ribose 1-diphosphate: step 5/9. In terms of biological role, IGPS catalyzes the conversion of PRFAR and glutamine to IGP, AICAR and glutamate. The HisH subunit catalyzes the hydrolysis of glutamine to glutamate and ammonia as part of the synthesis of IGP and AICAR. The resulting ammonia molecule is channeled to the active site of HisF. This Chromobacterium violaceum (strain ATCC 12472 / DSM 30191 / JCM 1249 / CCUG 213 / NBRC 12614 / NCIMB 9131 / NCTC 9757 / MK) protein is Imidazole glycerol phosphate synthase subunit HisH.